We begin with the raw amino-acid sequence, 800 residues long: Cation/H(+) antiporter 19 (800 aa).

12 consecutive transmembrane segments (helical) span residues 30-50, 60-77, 92-112, 127-147, 158-178, 196-216, 224-244, 278-298, 315-335, 343-363, 375-395, and 408-428; these read FALP…RLLA, RVIA…SALG, LTVL…LVGL, LLIA…TSFV, QLPF…PVLA, MSAA…AIAL, LVSV…VVAI, FVTD…GIVA, LVSG…TDVT, WGLL…GTVG, AVTL…VLNI, and AILV…VMLI. The segment at 776–800 is disordered; the sequence is ADTRPLVEEDAEYDQSSRDISDLTA. Residues 790 to 800 are compositionally biased toward basic and acidic residues; the sequence is QSSRDISDLTA.

This sequence belongs to the monovalent cation:proton antiporter 2 (CPA2) transporter (TC 2.A.37) family. CHX (TC 2.A.37.4) subfamily. In terms of tissue distribution, expressed in the whole plant but preferentially in pollen.

It is found in the membrane. In terms of biological role, may operate as a cation/H(+) antiporter. The protein is Cation/H(+) antiporter 19 (CHX19) of Arabidopsis thaliana (Mouse-ear cress).